The sequence spans 215 residues: N-(5'-phosphoribosyl)anthranilate isomerase (215 aa).

This sequence belongs to the TrpF family.

It carries out the reaction N-(5-phospho-beta-D-ribosyl)anthranilate = 1-(2-carboxyphenylamino)-1-deoxy-D-ribulose 5-phosphate. Its pathway is amino-acid biosynthesis; L-tryptophan biosynthesis; L-tryptophan from chorismate: step 3/5. The chain is N-(5'-phosphoribosyl)anthranilate isomerase from Parvibaculum lavamentivorans (strain DS-1 / DSM 13023 / NCIMB 13966).